Consider the following 297-residue polypeptide: MATH domain and coiled-coil domain-containing protein At2g05420 (297 aa).

The MATH domain occupies 7-139 (SKTITWVIEN…NGELTLVAKV (133 aa)). The stretch at 239-281 (KLDWLEKKHGEIKEKKKKEEASLKRLQEMEKQIFNEAQIYKEK) forms a coiled coil.

This Arabidopsis thaliana (Mouse-ear cress) protein is MATH domain and coiled-coil domain-containing protein At2g05420.